Here is a 468-residue protein sequence, read N- to C-terminus: UDP-N-acetylmuramate--L-alanine ligase (468 aa).

Residue 112–118 (GTHGKTT) participates in ATP binding.

Belongs to the MurCDEF family.

The protein localises to the cytoplasm. It catalyses the reaction UDP-N-acetyl-alpha-D-muramate + L-alanine + ATP = UDP-N-acetyl-alpha-D-muramoyl-L-alanine + ADP + phosphate + H(+). Its pathway is cell wall biogenesis; peptidoglycan biosynthesis. In terms of biological role, cell wall formation. This chain is UDP-N-acetylmuramate--L-alanine ligase, found in Bordetella avium (strain 197N).